A 108-amino-acid chain; its full sequence is Thiosulfate sulfurtransferase GlpE (108 aa).

Positions 17 to 105 constitute a Rhodanese domain; it reads HQGAAVLVDI…WHRHFPADVA (89 aa). Cys65 functions as the Cysteine persulfide intermediate in the catalytic mechanism.

The protein belongs to the GlpE family.

Its subcellular location is the cytoplasm. It catalyses the reaction thiosulfate + hydrogen cyanide = thiocyanate + sulfite + 2 H(+). It carries out the reaction thiosulfate + [thioredoxin]-dithiol = [thioredoxin]-disulfide + hydrogen sulfide + sulfite + 2 H(+). Functionally, transferase that catalyzes the transfer of sulfur from thiosulfate to thiophilic acceptors such as cyanide or dithiols. May function in a CysM-independent thiosulfate assimilation pathway by catalyzing the conversion of thiosulfate to sulfite, which can then be used for L-cysteine biosynthesis. This chain is Thiosulfate sulfurtransferase GlpE, found in Salmonella arizonae (strain ATCC BAA-731 / CDC346-86 / RSK2980).